The sequence spans 482 residues: Protein DETOXIFICATION 9 (482 aa).

12 helical membrane-spanning segments follow: residues 32-49, 64-84, 111-131, 144-164, 180-200, 209-229, 261-281, 289-309, 332-352, 374-394, 403-423, and 435-455; these read VASMAAPMVAVNMSQYLL, ALAGIALGSSFANVTGFGVLF, FTSIVFLLIISVPISILWMFM, IAELAGVYCLWLVPALFGYSV, PMVLSSLAALSFHVPLCWLMV, GAAASIGISYWLNAVFLWVYM, AMMCCLEWLAFEVITLLSGLL, SVISICLTTSSLHYNLVNGIG, AAAAIIIAAVESVIVSSSLFL, ITPILCISILMDSFLTVLSGI, IGAYVNITSYYVIGIPVGLLL, and WAGLVTGSTLQTLILFLVIGF.

The protein belongs to the multi antimicrobial extrusion (MATE) (TC 2.A.66.1) family.

The protein resides in the membrane. This chain is Protein DETOXIFICATION 9, found in Arabidopsis thaliana (Mouse-ear cress).